A 290-amino-acid chain; its full sequence is 4-hydroxy-tetrahydrodipicolinate synthase (290 aa).

Thr44 is a pyruvate binding site. The Proton donor/acceptor role is filled by Tyr132. Lys160 (schiff-base intermediate with substrate) is an active-site residue. Residue Ile202 coordinates pyruvate.

It belongs to the DapA family. Homotetramer; dimer of dimers.

It is found in the cytoplasm. It catalyses the reaction L-aspartate 4-semialdehyde + pyruvate = (2S,4S)-4-hydroxy-2,3,4,5-tetrahydrodipicolinate + H2O + H(+). It functions in the pathway amino-acid biosynthesis; L-lysine biosynthesis via DAP pathway; (S)-tetrahydrodipicolinate from L-aspartate: step 3/4. Catalyzes the condensation of (S)-aspartate-beta-semialdehyde [(S)-ASA] and pyruvate to 4-hydroxy-tetrahydrodipicolinate (HTPA). This is 4-hydroxy-tetrahydrodipicolinate synthase from Legionella pneumophila (strain Corby).